The following is a 900-amino-acid chain: Nitrate reductase [NADH] (900 aa).

Cys-172 lines the Mo-molybdopterin pocket. The 76-residue stretch at 521 to 596 folds into the Cytochrome b5 heme-binding domain; it reads TKMYSLSEVK…LEDYRVGELI (76 aa). The heme site is built by His-556 and His-579. One can recognise an FAD-binding FR-type domain in the interval 644–756; sequence REKIPCKLIS…KGPLGHIEYT (113 aa). Residues 696–699, 713–717, Phe-718, Phe-725, 730–732, and Thr-783 each bind FAD; these read RAYT, VVKVY, and AMS.

Belongs to the nitrate reductase family. In terms of assembly, homodimer. FAD is required as a cofactor. The cofactor is heme. It depends on Mo-molybdopterin as a cofactor.

It carries out the reaction nitrite + NAD(+) + H2O = nitrate + NADH + H(+). Nitrate reductase is a key enzyme involved in the first step of nitrate assimilation in plants, fungi and bacteria. This Lotus japonicus (Lotus corniculatus var. japonicus) protein is Nitrate reductase [NADH] (NIA).